The sequence spans 178 residues: Germinal center-associated signaling and motility protein (178 aa).

Phosphoserine is present on serine 99. Tyrosine 148 is modified (phosphotyrosine).

As to quaternary structure, interacts with ACTB and MYH2; the interaction with MYH2 is increased by IL6-induced phosphorylation. Interacts (via C-terminus) with ARHGEF11 (via DH domain). Interacts with ARHGEF12. Interacts with SYK; the interaction increases after B-cell receptor stimulation, resulting in enhanced SYK autophosphorylation and activity. Post-translationally, phosphorylation on tyrosine residues can be induced by IL6. Phosphorylation is mediated by LYN. In terms of processing, targeted by the ubiquitin E3 ligase subunit FBXO10 to mediate its ubiquitination and degradation. As to expression, expressed in diffuse large B-cell lymphoma (DLBCL) and several germinal center (GC)-like lymphoma cell lines (at protein level). Highly expressed in normal GC lymphocytes and GC-derived malignancies. Expressed in thymus and spleen.

The protein localises to the cytoplasm. Its subcellular location is the cell membrane. Its function is as follows. Involved in the negative regulation of lymphocyte motility. It mediates the migration-inhibitory effects of IL6. Serves as a positive regulator of the RhoA signaling pathway. Enhancement of RhoA activation results in inhibition of lymphocyte and lymphoma cell motility by activation of its downstream effector ROCK. Is a regulator of B-cell receptor signaling, that acts through SYK kinase activation. This is Germinal center-associated signaling and motility protein (GCSAM) from Homo sapiens (Human).